The primary structure comprises 301 residues: Ribosomal protein L11 methyltransferase (301 aa).

S-adenosyl-L-methionine is bound by residues Thr152, Gly173, Asp195, and Asn236.

Belongs to the methyltransferase superfamily. PrmA family.

It is found in the cytoplasm. It catalyses the reaction L-lysyl-[protein] + 3 S-adenosyl-L-methionine = N(6),N(6),N(6)-trimethyl-L-lysyl-[protein] + 3 S-adenosyl-L-homocysteine + 3 H(+). In terms of biological role, methylates ribosomal protein L11. The chain is Ribosomal protein L11 methyltransferase from Dictyoglomus thermophilum (strain ATCC 35947 / DSM 3960 / H-6-12).